A 58-amino-acid chain; its full sequence is Light-harvesting protein B-870 alpha chain (58 aa).

At 1–15 the chain is on the cytoplasmic side; the sequence is MSKFYKIWLVFDPRR. Residues 16–36 form a helical membrane-spanning segment; sequence VFVAQGVFLFLLAVLIHLILL. Residue histidine 32 coordinates a bacteriochlorophyll. The Periplasmic portion of the chain corresponds to 37 to 58; sequence STPAFNWLTVATAKHGYVAAAQ.

It belongs to the antenna complex alpha subunit family. As to quaternary structure, the core complex is formed by different alpha and beta chains, binding bacteriochlorophyll molecules, and arranged most probably in tetrameric structures disposed around the reaction center. The non-pigmented gamma chains may constitute additional components.

The protein localises to the cell inner membrane. In terms of biological role, antenna complexes are light-harvesting systems, which transfer the excitation energy to the reaction centers. The polypeptide is Light-harvesting protein B-870 alpha chain (pufA) (Rhodobacter capsulatus (Rhodopseudomonas capsulata)).